Reading from the N-terminus, the 196-residue chain is Putative acetyltransferase YJL218W (196 aa).

Residue Asn-84 participates in acetyl-CoA binding. The active-site Proton donor/acceptor is His-114. Acetyl-CoA contacts are provided by residues Gly-141, Ala-159, 164-165, Lys-179, and Arg-182; that span reads IR.

This sequence belongs to the transferase hexapeptide repeat family. Homodimer.

The polypeptide is Putative acetyltransferase YJL218W (Saccharomyces cerevisiae (strain ATCC 204508 / S288c) (Baker's yeast)).